We begin with the raw amino-acid sequence, 306 residues long: Protein pxr1 (306 aa).

A compositionally biased stretch (basic residues) spans 1-11 (MGLAAPRKRTK). 2 disordered regions span residues 1–27 (MGLA…STSG) and 148–241 (AQKE…SDIP). The segment covering 15 to 27 (DPNNTNWSRSTSG) has biased composition (polar residues). The 55-residue stretch at 25–79 (TSGYGHKIMSSQGWTPGSFLGARNAAHADMFTAASASHIRVVVKDDTLGLGARSK) folds into the G-patch domain. The segment covering 182 to 191 (NTLKALREEQ) has biased composition (basic and acidic residues). Positions 219–228 (KKERKTKKRK) are enriched in basic residues.

Belongs to the PINX1 family.

The protein localises to the nucleus. It localises to the nucleolus. Its function is as follows. Involved in rRNA-processing at A0, A1 and A2 sites and negatively regulates telomerase. The chain is Protein pxr1 (pxr1) from Aspergillus oryzae (strain ATCC 42149 / RIB 40) (Yellow koji mold).